A 310-amino-acid chain; its full sequence is Methionyl-tRNA formyltransferase (310 aa).

111-114 (SLLP) contributes to the (6S)-5,6,7,8-tetrahydrofolate binding site.

This sequence belongs to the Fmt family.

The enzyme catalyses L-methionyl-tRNA(fMet) + (6R)-10-formyltetrahydrofolate = N-formyl-L-methionyl-tRNA(fMet) + (6S)-5,6,7,8-tetrahydrofolate + H(+). Its function is as follows. Attaches a formyl group to the free amino group of methionyl-tRNA(fMet). The formyl group appears to play a dual role in the initiator identity of N-formylmethionyl-tRNA by promoting its recognition by IF2 and preventing the misappropriation of this tRNA by the elongation apparatus. In Rhodopseudomonas palustris (strain BisB5), this protein is Methionyl-tRNA formyltransferase.